The chain runs to 729 residues: Glycine--tRNA ligase (729 aa).

The N-terminal 33 residues, 1–33 (MPCLLPSLLRATRAALPLLSPPRVVAASASQRL), are a transit peptide targeting the mitochondrion. The WHEP-TRS domain occupies 53-109 (LLAPLRLAVRQQGDFVRKLKEDKAPQVDVDRAVAELKARKRVLEAKELALQPKDDIV). The residue at position 194 (Lys194) is an N6-acetyllysine. Glu289 contributes to the glycine binding site. Residues 321–323 (RNE) and 332–333 (RV) contribute to the ATP site. Glu340 serves as a coordination point for glycine. Residue Tyr443 is modified to Phosphotyrosine. Residue 447–448 (EI) coordinates ATP. Lys491 carries the post-translational modification N6-acetyllysine. 566-568 (EPS) provides a ligand contact to glycine. An ATP-binding site is contributed by Arg573. Residue Ser690 is modified to Phosphoserine. A Phosphothreonine modification is found at Thr726.

It belongs to the class-II aminoacyl-tRNA synthetase family. Homodimer.

It localises to the cytoplasm. It is found in the mitochondrion. The protein resides in the cell projection. Its subcellular location is the axon. The protein localises to the secreted. It localises to the extracellular exosome. The catalysed reaction is tRNA(Gly) + glycine + ATP = glycyl-tRNA(Gly) + AMP + diphosphate. It catalyses the reaction 2 ATP + H(+) = P(1),P(4)-bis(5'-adenosyl) tetraphosphate + diphosphate. Its function is as follows. Catalyzes the ATP-dependent ligation of glycine to the 3'-end of its cognate tRNA, via the formation of an aminoacyl-adenylate intermediate (Gly-AMP). Also produces diadenosine tetraphosphate (Ap4A), a universal pleiotropic signaling molecule needed for cell regulation pathways, by direct condensation of 2 ATPs. Thereby, may play a special role in Ap4A homeostasis. In Mus musculus (Mouse), this protein is Glycine--tRNA ligase (Gars1).